Consider the following 548-residue polypeptide: MKKATKLLLSILPISSISFLSVVSCSTRNSNAKQPDKKPEKPNEKGPIIPKNPDNKKPTNNNNNSNNNSNSNNNKPGSTVPNENKDPSKSEETPEKPERDPKKPDKQPQGDDPNNHQPHNNQHADQPNINKDEFADLDKLPKEISFERFDFYTSKDATTALSHLRTDGSVIKIIFSNTHRNIFGKYNINLELDGNEKEDVKKGLIDKVKVKFTNKKDKKSKIIEFTFTGFKVIQKSPDKENKNSKKNYIKKKEKIDNKLTGLYPSLVAYMIMYTQEPKNYKNLMQKDSINFEELENNNPNLFADPEINLNVVALKDLLLEYNRELGKLYKDKVIAVSYDDVNGKLGLKLLIENREENDTIASKYSETLEFDFVGFRKIDLKNPNKNVLSLLFPQNNFKDMIKNNVFKKKIEVLKSGKQKEDMVLVKEEYAKQLIFKNLLVQIIDNENNLYRSTQTLSLQNNKKDNYTSILGLAGGGTLYPFHTIINNNSIKNIYLMINKEKNKKYKVAINFEVDIPIFASTTSDLTFHATSGDTNILKLDITTNALID.

The first 24 residues, 1–24 (MKKATKLLLSILPISSISFLSVVS), serve as a signal peptide directing secretion. Cysteine 25 is lipidated: N-palmitoyl cysteine. Residue cysteine 25 is the site of S-diacylglycerol cysteine attachment. The tract at residues 26-129 (STRNSNAKQP…NNQHADQPNI (104 aa)) is disordered. Basic and acidic residues predominate over residues 34-44 (QPDKKPEKPNE). A compositionally biased stretch (low complexity) spans 58–78 (PTNNNNNSNNNSNSNNNKPGS). A compositionally biased stretch (basic and acidic residues) spans 83–109 (ENKDPSKSEETPEKPERDPKKPDKQPQ). Low complexity predominate over residues 110 to 128 (GDDPNNHQPHNNQHADQPN).

Belongs to the mycoplasma p72 lipoprotein family.

It is found in the cell membrane. This is an uncharacterized protein from Mycoplasma mycoides subsp. mycoides SC (strain CCUG 32753 / NCTC 10114 / PG1).